Here is a 236-residue protein sequence, read N- to C-terminus: Small ribosomal subunit protein uS3 (236 aa).

Residues 39 to 107 (IRLYVLEELK…ETSLNIVEIH (69 aa)) form the KH type-2 domain.

This sequence belongs to the universal ribosomal protein uS3 family. Part of the 30S ribosomal subunit. Forms a tight complex with proteins S10 and S14.

In terms of biological role, binds the lower part of the 30S subunit head. Binds mRNA in the 70S ribosome, positioning it for translation. This chain is Small ribosomal subunit protein uS3, found in Bartonella quintana (strain Toulouse) (Rochalimaea quintana).